The primary structure comprises 178 residues: Ribosome maturation factor RimM (178 aa).

The PRC barrel domain maps to 100–173 (ADEYFIHQLY…QIVVRLLPGL (74 aa)).

Belongs to the RimM family. As to quaternary structure, binds ribosomal protein uS19.

It localises to the cytoplasm. Functionally, an accessory protein needed during the final step in the assembly of 30S ribosomal subunit, possibly for assembly of the head region. Essential for efficient processing of 16S rRNA. May be needed both before and after RbfA during the maturation of 16S rRNA. It has affinity for free ribosomal 30S subunits but not for 70S ribosomes. This chain is Ribosome maturation factor RimM, found in Roseiflexus castenholzii (strain DSM 13941 / HLO8).